The chain runs to 479 residues: Proline--tRNA ligase (479 aa).

The protein belongs to the class-II aminoacyl-tRNA synthetase family. ProS type 3 subfamily. As to quaternary structure, homodimer.

It localises to the cytoplasm. The enzyme catalyses tRNA(Pro) + L-proline + ATP = L-prolyl-tRNA(Pro) + AMP + diphosphate. Functionally, catalyzes the attachment of proline to tRNA(Pro) in a two-step reaction: proline is first activated by ATP to form Pro-AMP and then transferred to the acceptor end of tRNA(Pro). The polypeptide is Proline--tRNA ligase (Mesomycoplasma hyopneumoniae (strain 7448) (Mycoplasma hyopneumoniae)).